We begin with the raw amino-acid sequence, 429 residues long: Glutamate-1-semialdehyde 2,1-aminomutase 2 (429 aa).

N6-(pyridoxal phosphate)lysine is present on Lys268.

The protein belongs to the class-III pyridoxal-phosphate-dependent aminotransferase family. HemL subfamily. As to quaternary structure, homodimer. Requires pyridoxal 5'-phosphate as cofactor.

Its subcellular location is the cytoplasm. The enzyme catalyses (S)-4-amino-5-oxopentanoate = 5-aminolevulinate. It functions in the pathway porphyrin-containing compound metabolism; protoporphyrin-IX biosynthesis; 5-aminolevulinate from L-glutamyl-tRNA(Glu): step 2/2. This is Glutamate-1-semialdehyde 2,1-aminomutase 2 from Bacillus velezensis (strain DSM 23117 / BGSC 10A6 / LMG 26770 / FZB42) (Bacillus amyloliquefaciens subsp. plantarum).